The primary structure comprises 66 residues: Large ribosomal subunit protein bL35 (66 aa).

It belongs to the bacterial ribosomal protein bL35 family.

This is Large ribosomal subunit protein bL35 from Brucella anthropi (strain ATCC 49188 / DSM 6882 / CCUG 24695 / JCM 21032 / LMG 3331 / NBRC 15819 / NCTC 12168 / Alc 37) (Ochrobactrum anthropi).